Here is a 205-residue protein sequence, read N- to C-terminus: uncharacterized protein (205 aa).

3 helical membrane passes run Leu45–Ile65, Val119–Phe139, and Phe144–Tyr164.

Belongs to the TVP23 family.

Its subcellular location is the membrane. This is an uncharacterized protein from Caenorhabditis elegans.